Here is a 166-residue protein sequence, read N- to C-terminus: 16S rRNA aminocarboxypropyltransferase (166 aa).

Threonine 17, isoleucine 62, leucine 84, tyrosine 99, and serine 103 together coordinate S-adenosyl-L-methionine.

This sequence belongs to the TDD superfamily. TSR3 family.

Its subcellular location is the cytoplasm. The enzyme catalyses an N(1)-methylpseudouridine in rRNA + S-adenosyl-L-methionine = N(1)-methyl-N(3)-[(3S)-3-amino-3-carboxypropyl]pseudouridine in rRNA + S-methyl-5'-thioadenosine + H(+). In terms of biological role, aminocarboxypropyltransferase that catalyzes the aminocarboxypropyl transfer on pseudouridine corresponding to position 914 in M.jannaschii 16S rRNA. It constitutes the last step in biosynthesis of the hypermodified N1-methyl-N3-(3-amino-3-carboxypropyl) pseudouridine (m1acp3-Psi). The protein is 16S rRNA aminocarboxypropyltransferase of Saccharolobus islandicus (strain M.16.27) (Sulfolobus islandicus).